Reading from the N-terminus, the 1167-residue chain is C5a peptidase (1167 aa).

The N-terminal stretch at 1–31 (MRKKQKLPFDKLAIALMSTSILLNAQSDIKA) is a signal peptide. The span at 34-52 (VTEDTPVTEQAVETPQPTA) shows a compositional bias: polar residues. A disordered region spans residues 34-73 (VTEDTPVTEQAVETPQPTAVSEEVPSSKETKTPQTPDDAE). A Peptidase S8 domain is found at 99–581 (KATIRDLNDP…AGAVDAKKAS (483 aa)). Active-site charge relay system residues include aspartate 130, histidine 193, and serine 512. The disordered stretch occupies residues 1029 to 1133 (EGHSNKPEQD…RDQLPTTNDK (105 aa)). 4 tandem repeats follow at residues 1034 to 1050 (KPEQDGSGQTPDKKPEA), 1051 to 1067 (KPEQDGSDQAPDKKPEA), 1068 to 1084 (KPEQDGSGQTPDKKPET), and 1085 to 1101 (KPEKDSSGQTPGKTPQK). The tract at residues 1034–1101 (KPEQDGSGQT…GQTPGKTPQK (68 aa)) is 4 X 17 AA tandem repeats. 2 stretches are compositionally biased toward basic and acidic residues: residues 1044 to 1071 (PDKKPEAKPEQDGSDQAPDKKPEAKPEQ) and 1078 to 1090 (PDKKPETKPEKDS). Polar residues-rich tracts occupy residues 1092-1106 (GQTPGKTPQKGQPSR) and 1120-1130 (KASTRDQLPTT). Positions 1127–1131 (LPTTN) match the LPXTG sorting signal motif. The residue at position 1130 (threonine 1130) is a Pentaglycyl murein peptidoglycan amidated threonine. Residues 1131-1167 (NDKDTNRLHLLKLVMTTFFFGLVAHIFKTKRQKETKK) constitute a propeptide, removed by sortase.

Belongs to the peptidase S8 family. In terms of processing, cleaved by SpeB protease; leading to its degradation. Degradation by SpeB is probably strictly regulated to preserve integrity of C5a peptidase.

The protein localises to the secreted. It is found in the cell wall. It carries out the reaction The primary cleavage site is at 67-His-|-Lys-68 in human C5a with a minor secondary cleavage site at 58-Ala-|-Ser-59.. Functionally, this virulence factor of S.pyogenes specifically cleaves the human serum chemotaxin C5a at '68-Lys-|-Asp-69' bond near its C-terminus, destroying its ability to serve as a chemoattractant. This Streptococcus pyogenes protein is C5a peptidase (scpA).